The sequence spans 163 residues: MFAVIKTGGKQYHVVANQVVKVEKVIGNAGDVVEFNDILMVGQEDNTIIGAPVVADALVTAEIIKQARARKVISFKKRRRQNSKCTRGHRQEVTILRILEILTGGLKPKRAVAKPIKEEAAVLKETTKKTKATVSIKKTAKKPSEKKSAPQKKAAVVSNNKED.

The disordered stretch occupies residues 124–163; that stretch reads KETTKKTKATVSIKKTAKKPSEKKSAPQKKAAVVSNNKED.

The protein belongs to the bacterial ribosomal protein bL21 family. In terms of assembly, part of the 50S ribosomal subunit. Contacts protein L20.

Functionally, this protein binds to 23S rRNA in the presence of protein L20. The chain is Large ribosomal subunit protein bL21 from Bartonella quintana (strain Toulouse) (Rochalimaea quintana).